The sequence spans 391 residues: Inner membrane protein YdcO (391 aa).

Residues 1–9 are Cytoplasmic-facing; sequence MRLFSIPPP. Residues 10 to 30 traverse the membrane as a helical segment; the sequence is TLLAGFLAVLIGYASSAAIIW. Residues 31 to 42 are Periplasmic-facing; it reads QAAIVAGATTAQ. Residues 43–63 form a helical membrane-spanning segment; the sequence is ISGWMTALGLAMGVSTLTLTL. At 64–93 the chain is on the cytoplasmic side; that stretch reads WYRVPVLTAWSTPGAALLVTGLQGLTLNEA. The chain crosses the membrane as a helical span at residues 94–114; sequence IGVFIVTNALIVLCGITGLFA. Topologically, residues 115–123 are periplasmic; the sequence is RLMRIIPHS. Residues 124-144 form a helical membrane-spanning segment; sequence LAAAMLAGILLRFGLQAFASL. Topologically, residues 145-167 are cytoplasmic; that stretch reads DGQFTLCGSMLLVWLATKAVAPR. Residues 168-188 form a helical membrane-spanning segment; sequence YAVIAAMIIGIVIVIAQGDVV. Residues 189–200 are Periplasmic-facing; sequence TTDVVFKPVLPT. Residues 201–221 form a helical membrane-spanning segment; sequence YITPDFSFAHSLSVALPLFLV. Residues 222–246 are Cytoplasmic-facing; sequence TMASQNAPGIAAMKAAGYSAPVSPL. A helical transmembrane segment spans residues 247–267; that stretch reads IVFTGLLALVFSPFGVYSVGI. Residues 268–287 are Periplasmic-facing; sequence AAITAAICQSPEAHPDKDQR. The helical transmembrane segment at 288-308 threads the bilayer; it reads WLAAAVAGIFYLLAGLFGSAI. Topologically, residues 309-311 are cytoplasmic; that stretch reads TGM. The chain crosses the membrane as a helical span at residues 312-332; it reads MAALPVSWIQMLAGLALLSTI. Residues 333–361 are Periplasmic-facing; the sequence is GGSLYQALHNERERDAAVVAFLVTASGLT. Residues 362 to 382 form a helical membrane-spanning segment; sequence LVGIGSAFWGLIAGGVCYVVL. Topologically, residues 383–391 are cytoplasmic; it reads NLIADRNRY.

It is found in the cell inner membrane. The protein is Inner membrane protein YdcO (ydcO) of Escherichia coli (strain K12).